Reading from the N-terminus, the 789-residue chain is Aryl hydrocarbon receptor nuclear translocator (789 aa).

Residues 1–14 (MAATTANPEMTSDV) show a composition bias toward polar residues. The tract at residues 1–97 (MAATTANPEM…RLARENHSEI (97 aa)) is disordered. Alanine 2 is modified (N-acetylalanine). Gly residues predominate over residues 26–35 (SGPGIQGGGA). Residue lysine 58 forms a Glycyl lysine isopeptide (Lys-Gly) (interchain with G-Cter in SUMO2) linkage. The span at 60 to 97 (LRCDDDQMSNDKERFARSDDEQSSADKERLARENHSEI) shows a compositional bias: basic and acidic residues. Serine 77 is subject to Phosphoserine. The tract at residues 88-128 (RLARENHSEIERRRRNKMTAYITELSDMVPTCSALARKPDK) is DNA-binding. Residues 89–142 (LARENHSEIERRRRNKMTAYITELSDMVPTCSALARKPDKLTILRMAVSHMKSL) form the bHLH domain. The tract at residues 112–168 (LSDMVPTCSALARKPDKLTILRMAVSHMKSLRGTGNTSTDGSYKPSFLTDQELKHLI) is required for heterodimer formation with HIF1A. The tract at residues 112-264 (LSDMVPTCSA…MCMGSRRSFI (153 aa)) is required for heterodimer formation with EPAS1. 2 consecutive PAS domains span residues 161-235 (DQEL…LTGR) and 349-419 (PNCT…VKLK). A mediates the transcription activity and dimerization of the AHR:ARNT complex region spans residues 167 to 171 (LILEA). In terms of domain architecture, PAC spans 424–467 (SVMFRFRSKNQEWLWMRTSSFTFQNPYSDEIEYIICTNTNVKNS). The segment covering 465–481 (KNSSQEPRPTLSNTIQR) has biased composition (polar residues). Disordered stretches follow at residues 465–492 (KNSS…NLPL) and 672–789 (TPSS…PFSE). Residues 672–696 (TPSSFSSMSLPGAPTASPGAAAYPS) are compositionally biased toward low complexity. Over residues 708–719 (TGQTAGQFQTRT) the composition is skewed to polar residues. Low complexity-rich tracts occupy residues 723 to 733 (VGVWPQWQGQQ) and 743 to 756 (QHVQ…PGQP).

Monomer. Homodimer only upon binding to a DNA. Efficient DNA binding requires dimerization with another bHLH protein. Interacts with TACC3. Interacts with HIF1A, EPAS1, NPAS1 and NPAS3; forms a heterodimer that binds core DNA sequence 5'-TACGTG-3' within the hypoxia response element (HRE) of target gene promoters. Forms a heterodimer with AHRR, as well as with other bHLH proteins. Interacts with NOCA7. Interacts with TACC3. Interacts with AHR; the heterodimer ARNT:AHR binds to core DNA sequence 5'-TGCGTG-3' within the dioxin response element (DRE) of target gene promoters and activates their transcription. Interacts with SIM1 and NPAS4.

It is found in the nucleus. In terms of biological role, required for activity of the AHR. Upon ligand binding, AHR translocates into the nucleus, where it heterodimerizes with ARNT and induces transcription by binding to xenobiotic response elements (XRE). Not required for the ligand-binding subunit to translocate from the cytosol to the nucleus after ligand binding. The complex initiates transcription of genes involved in the regulation of a variety of biological processes, including angiogenesis, hematopoiesis, drug and lipid metabolism, cell motility and immune modulation. The heterodimer binds to core DNA sequence 5'-TACGTG-3' within the hypoxia response element (HRE) of target gene promoters and functions as a transcriptional regulator of the adaptive response to hypoxia. The heterodimer ARNT:AHR binds to core DNA sequence 5'-TGCGTG-3' within the dioxin response element (DRE) of target gene promoters and activates their transcription. The chain is Aryl hydrocarbon receptor nuclear translocator from Homo sapiens (Human).